The sequence spans 156 residues: Small ribosomal subunit protein uS7 (156 aa).

This sequence belongs to the universal ribosomal protein uS7 family. In terms of assembly, part of the 30S ribosomal subunit. Contacts proteins S9 and S11.

In terms of biological role, one of the primary rRNA binding proteins, it binds directly to 16S rRNA where it nucleates assembly of the head domain of the 30S subunit. Is located at the subunit interface close to the decoding center, probably blocks exit of the E-site tRNA. The protein is Small ribosomal subunit protein uS7 of Anoxybacillus flavithermus (strain DSM 21510 / WK1).